The chain runs to 117 residues: MTTSFYFLLMALGLLLYVCQSSFGNQHTRNSDTPKYRCGSDIPNSYMDLCFRKRNDAGKKRGQASPLWQRGGSLSMLKARAKRNEAFHLQRAHRGVVEHCCKRACSNAEFMQFCGNS.

An N-terminal signal peptide occupies residues 1–24 (MTTSFYFLLMALGLLLYVCQSSFG). Residues 25–29 (NQHTR) constitute a propeptide that is removed on maturation. Pro-34 carries the 4-hydroxyproline; partial modification. Cystine bridges form between Cys-38-Cys-101, Cys-50-Cys-114, and Cys-100-Cys-105. Residues 53–94 (KRNDAGKKRGQASPLWQRGGSLSMLKARAKRNEAFHLQRAHR) constitute a propeptide, c peptide. Glu-98 bears the 4-carboxyglutamate mark. At Glu-109 the chain carries 4-carboxyglutamate; partial. Position 114 is a cysteine amide (Cys-114). A propeptide spanning residues 116–117 (NS) is cleaved from the precursor.

Belongs to the insulin family. In terms of assembly, heterodimer of A and B chains; disulfide-linked. In terms of tissue distribution, expressed by the venom gland.

The protein localises to the secreted. In terms of biological role, this venom insulin facilitates prey capture by rapidly inducing hypoglycemic shock. It is one of the smallest known insulin found in nature and lacks the C-terminal segment of the B chain that, in human insulin, mediates engagement of the insulin receptor (INSR) and assembly of the hormone's hexameric storage form. Despite lacking this segment, it both binds and activates human insulin receptor (long isoform (HIR-B) OF INSR) with only a 10-fold lower potency. In vivo, intraperitoneal injection of this peptide into zebrafish lowers blood glucose with the same potency than human insulin. In addition, when applied to water, this peptide reduces overall locomotor activity of zebrafish larvae, observed as a significant decrease in the percentage of time spent swimming and movement frequency. The polypeptide is Con-Ins T3 (Conus tulipa (Fish-hunting cone snail)).